The following is a 424-amino-acid chain: MSVKWEKQEGNEGVLTVEVDADTFNKALDDAFKKVVKQVSIPGFRKGKVPRGLFEQRFGVEALYQDALDILLPVEYPKAVEEAGIEPVDRPEIDVEKIEKGENLIFTAKVTVKPEVKLGEYKGLGIEKDDTAVTDEDVQNELKSLQERQAELVVKEDGKVEEGDTVVLDFEGFVDGEAFEGGKAENYSLEVGSGSFIPGFEDQLVGLEAGAEKDVEVTFPEEYHAEELAGKPAVFKVKIHEIKAKELPELDDEFAKDVDEEVGTLAELTEKTKKRLEEAKENEADAKLREELVLKAAENAEADIPQAMIDTELDRMMKEFEQRLQMQGMNLELYFQFSGQDENALKEQMKEDAEKRVKSNLTLEAIAKAENLQVTDEEVEEELSKMAEAYNMPVENIKQAIGSTDGMKEDLKVRKAIDFLVENR.

Residues 163–248 form the PPIase FKBP-type domain; that stretch reads GDTVVLDFEG…IHEIKAKELP (86 aa).

The protein belongs to the FKBP-type PPIase family. Tig subfamily.

Its subcellular location is the cytoplasm. It catalyses the reaction [protein]-peptidylproline (omega=180) = [protein]-peptidylproline (omega=0). In terms of biological role, involved in protein export. Acts as a chaperone by maintaining the newly synthesized protein in an open conformation. Functions as a peptidyl-prolyl cis-trans isomerase. In Bacillus licheniformis (strain ATCC 14580 / DSM 13 / JCM 2505 / CCUG 7422 / NBRC 12200 / NCIMB 9375 / NCTC 10341 / NRRL NRS-1264 / Gibson 46), this protein is Trigger factor.